The chain runs to 71 residues: uncharacterized protein (71 aa).

The helical transmembrane segment at 24-44 threads the bilayer; that stretch reads FGGGGLSTAIYSIFAFFSIPL.

It localises to the membrane. This is an uncharacterized protein from Schizosaccharomyces pombe (strain 972 / ATCC 24843) (Fission yeast).